Here is a 352-residue protein sequence, read N- to C-terminus: Protein pelota homolog (352 aa).

This sequence belongs to the eukaryotic release factor 1 family. Pelota subfamily. In terms of assembly, monomer. A divalent metal cation serves as cofactor.

Its subcellular location is the cytoplasm. May function in recognizing stalled ribosomes, interact with stem-loop structures in stalled mRNA molecules, and effect endonucleolytic cleavage of the mRNA. May play a role in the release non-functional ribosomes and degradation of damaged mRNAs. Has endoribonuclease activity. This Thermofilum pendens (strain DSM 2475 / Hrk 5) protein is Protein pelota homolog.